The chain runs to 271 residues: 60 kDa heat shock protein, mitochondrial (271 aa).

Serine 30 and serine 33 each carry phosphoserine. Position 50-54 (50-54) interacts with ATP; the sequence is DGTTT. N6-acetyllysine is present on lysine 83. An N6-acetyllysine; alternate mark is found at lysine 84, lysine 97, and lysine 112. 3 positions are modified to N6-succinyllysine; alternate: lysine 84, lysine 97, and lysine 112. Lysine 125 carries the N6-acetyllysine modification. N6-acetyllysine; alternate is present on lysine 126. N6-succinyllysine; alternate is present on lysine 126. Position 145 is an N6-acetyllysine (lysine 145). N6-succinyllysine is present on lysine 175. N6-acetyllysine occurs at positions 188 and 237. Glycine 257 is an ATP binding site. The residue at position 270 (lysine 270) is an N6-acetyllysine.

This sequence belongs to the chaperonin (HSP60) family. Homoheptamer arranged in a ring structure. The functional units of these chaperonins consist of heptameric rings of the large subunit Hsp60, which function as a back-to-back double ring. Interacts with 2 heptameric Hsp10 rings to form the symmetrical football complex. Interacts with HRAS. Interacts with ATAD3A. Interacts with ETFBKMT and EEF1AKMT3. Interacts with MFHAS1. As to expression, detected at higher levels in caput epididymal spermatazoa than in cauda epididymal spermatazoa (at protein level).

Its subcellular location is the mitochondrion matrix. The catalysed reaction is ATP + H2O + a folded polypeptide = ADP + phosphate + an unfolded polypeptide.. Chaperonin implicated in mitochondrial protein import and macromolecular assembly. Together with Hsp10, facilitates the correct folding of imported proteins. May also prevent misfolding and promote the refolding and proper assembly of unfolded polypeptides generated under stress conditions in the mitochondrial matrix. The functional units of these chaperonins consist of heptameric rings of the large subunit Hsp60, which function as a back-to-back double ring. In a cyclic reaction, Hsp60 ring complexes bind one unfolded substrate protein per ring, followed by the binding of ATP and association with 2 heptameric rings of the co-chaperonin Hsp10. This leads to sequestration of the substrate protein in the inner cavity of Hsp60 where, for a certain period of time, it can fold undisturbed by other cell components. Synchronous hydrolysis of ATP in all Hsp60 subunits results in the dissociation of the chaperonin rings and the release of ADP and the folded substrate protein. This Mesocricetus auratus (Golden hamster) protein is 60 kDa heat shock protein, mitochondrial.